We begin with the raw amino-acid sequence, 157 residues long: 6,7-dimethyl-8-ribityllumazine synthase (157 aa).

Residues F30, 64–66 (ALE), and 88–90 (CII) each bind 5-amino-6-(D-ribitylamino)uracil. Residue 93–94 (ET) participates in (2S)-2-hydroxy-3-oxobutyl phosphate binding. H96 functions as the Proton donor in the catalytic mechanism. A 5-amino-6-(D-ribitylamino)uracil-binding site is contributed by N121. A (2S)-2-hydroxy-3-oxobutyl phosphate-binding site is contributed by R135.

Belongs to the DMRL synthase family.

It catalyses the reaction (2S)-2-hydroxy-3-oxobutyl phosphate + 5-amino-6-(D-ribitylamino)uracil = 6,7-dimethyl-8-(1-D-ribityl)lumazine + phosphate + 2 H2O + H(+). It functions in the pathway cofactor biosynthesis; riboflavin biosynthesis; riboflavin from 2-hydroxy-3-oxobutyl phosphate and 5-amino-6-(D-ribitylamino)uracil: step 1/2. Functionally, catalyzes the formation of 6,7-dimethyl-8-ribityllumazine by condensation of 5-amino-6-(D-ribitylamino)uracil with 3,4-dihydroxy-2-butanone 4-phosphate. This is the penultimate step in the biosynthesis of riboflavin. In Albidiferax ferrireducens (strain ATCC BAA-621 / DSM 15236 / T118) (Rhodoferax ferrireducens), this protein is 6,7-dimethyl-8-ribityllumazine synthase.